The chain runs to 287 residues: Fructose-bisphosphate aldolase (287 aa).

Residue S50 coordinates D-glyceraldehyde 3-phosphate. Residue D85 is the Proton donor of the active site. Residues H86, D107, E137, and H181 each coordinate Zn(2+). G182 is a binding site for dihydroxyacetone phosphate. H209 serves as a coordination point for Zn(2+). Dihydroxyacetone phosphate-binding positions include 210–212 (GGT) and 231–234 (NVNT). 2 positions are modified to phosphothreonine: T212 and T234.

The protein belongs to the class II fructose-bisphosphate aldolase family. The cofactor is Zn(2+).

The catalysed reaction is beta-D-fructose 1,6-bisphosphate = D-glyceraldehyde 3-phosphate + dihydroxyacetone phosphate. It participates in carbohydrate degradation; glycolysis; D-glyceraldehyde 3-phosphate and glycerone phosphate from D-glucose: step 4/4. In terms of biological role, catalyzes the aldol condensation of dihydroxyacetone phosphate (DHAP or glycerone-phosphate) with glyceraldehyde 3-phosphate (G3P) to form fructose 1,6-bisphosphate (FBP) in gluconeogenesis and the reverse reaction in glycolysis. The polypeptide is Fructose-bisphosphate aldolase (fba) (Geobacillus stearothermophilus (Bacillus stearothermophilus)).